The chain runs to 570 residues: Pantothenate kinase 2, mitochondrial (570 aa).

The transit peptide at 1-31 (MRRLGPFHPRVHWAAPPSLSSGLHRLLFLRG) directs the protein to the mitochondrion. Disordered stretches follow at residues 34–94 (IPSS…PRAR) and 127–198 (GRLG…SVSR). A Nucleolar localization signal motif is present at residues 82–94 (RWRNGRGGRPRAR). The segment covering 84-93 (RNGRGGRPRA) has biased composition (basic residues). The span at 155–164 (PEGRRQEPLR) shows a compositional bias: basic and acidic residues. Serine 168, serine 169, and serine 189 each carry phosphoserine. Over residues 168–179 (SSASVPAVGASA) the composition is skewed to low complexity. Residues 268–275 (LELKDLTL) carry the Nuclear export signal motif. The active-site Proton acceptor is the glutamate 338. 3 residues coordinate acetyl-CoA: serine 392, serine 395, and arginine 407.

It belongs to the type II pantothenate kinase family. As to quaternary structure, homodimer. Synthesized as a 62-kDa precursor which is proteolytically processed by the mitochondrial-processing peptidase (MPP) via a 59-kDa intermediate to yield the mature mitochondrial 48-kDa subunit. As to expression, expressed in the brain (at protein level). Ubiquitous. Highly expressed in the testis. Expressed in the umbilical vein endothelial cells (HUVEC).

Its subcellular location is the mitochondrion. The protein localises to the mitochondrion intermembrane space. The protein resides in the nucleus. It is found in the cytoplasm. The enzyme catalyses (R)-pantothenate + ATP = (R)-4'-phosphopantothenate + ADP + H(+). Its pathway is cofactor biosynthesis; coenzyme A biosynthesis; CoA from (R)-pantothenate: step 1/5. Its activity is regulated as follows. Strongly inhibited by acetyl-CoA and its thioesters. Activated by palmitoylcarnitine. Mitochondrial isoform that catalyzes the phosphorylation of pantothenate to generate 4'-phosphopantothenate in the first and rate-determining step of coenzyme A (CoA) synthesis. Required for angiogenic activity of umbilical vein of endothelial cells (HUVEC). Functionally, cytoplasmic isoform that catalyzes the phosphorylation of pantothenate to generate 4'-phosphopantothenate in the first and rate-determining step of coenzyme A (CoA) synthesis. This chain is Pantothenate kinase 2, mitochondrial (PANK2), found in Homo sapiens (Human).